We begin with the raw amino-acid sequence, 417 residues long: UDP-N-acetylmuramoylalanine--D-glutamate ligase (417 aa).

Position 101 to 107 (101 to 107 (GTAGKTS)) interacts with ATP.

Belongs to the MurCDEF family.

Its subcellular location is the cytoplasm. It carries out the reaction UDP-N-acetyl-alpha-D-muramoyl-L-alanine + D-glutamate + ATP = UDP-N-acetyl-alpha-D-muramoyl-L-alanyl-D-glutamate + ADP + phosphate + H(+). Its pathway is cell wall biogenesis; peptidoglycan biosynthesis. Cell wall formation. Catalyzes the addition of glutamate to the nucleotide precursor UDP-N-acetylmuramoyl-L-alanine (UMA). The chain is UDP-N-acetylmuramoylalanine--D-glutamate ligase from Thermus thermophilus (strain ATCC BAA-163 / DSM 7039 / HB27).